A 173-amino-acid polypeptide reads, in one-letter code: MMTQAASGIDLFIPEVYDIVWSLIILVIVAVFFYKFFMPKFNAIFDERAAKIQGNIAKAEQARKDADEAKAKYEAQLSTARVDAAKIRDDARAEASHIIADARSRAESDAAQITASAQRSIESQHQQAIVSLKGEVGALATALAGKILGAKLEDNDVQSSMIDSMIDDLGAKK.

A helical transmembrane segment spans residues Ile19–Pro39.

This sequence belongs to the ATPase B chain family. F-type ATPases have 2 components, F(1) - the catalytic core - and F(0) - the membrane proton channel. F(1) has five subunits: alpha(3), beta(3), gamma(1), delta(1), epsilon(1). F(0) has three main subunits: a(1), b(2) and c(10-14). The alpha and beta chains form an alternating ring which encloses part of the gamma chain. F(1) is attached to F(0) by a central stalk formed by the gamma and epsilon chains, while a peripheral stalk is formed by the delta and b chains.

It is found in the cell membrane. Its function is as follows. F(1)F(0) ATP synthase produces ATP from ADP in the presence of a proton or sodium gradient. F-type ATPases consist of two structural domains, F(1) containing the extramembraneous catalytic core and F(0) containing the membrane proton channel, linked together by a central stalk and a peripheral stalk. During catalysis, ATP synthesis in the catalytic domain of F(1) is coupled via a rotary mechanism of the central stalk subunits to proton translocation. Functionally, component of the F(0) channel, it forms part of the peripheral stalk, linking F(1) to F(0). This Bifidobacterium longum (strain NCC 2705) protein is ATP synthase subunit b.